Here is a 342-residue protein sequence, read N- to C-terminus: Ferredoxin--NADP reductase (342 aa).

Residues Cys17, Asp36, Gln44, Tyr49, Ile89, Phe124, Asp289, and Thr330 each contribute to the FAD site.

The protein belongs to the ferredoxin--NADP reductase type 2 family. In terms of assembly, homodimer. FAD serves as cofactor.

It carries out the reaction 2 reduced [2Fe-2S]-[ferredoxin] + NADP(+) + H(+) = 2 oxidized [2Fe-2S]-[ferredoxin] + NADPH. The protein is Ferredoxin--NADP reductase of Rhodopseudomonas palustris (strain BisB5).